A 1045-amino-acid polypeptide reads, in one-letter code: Translation initiation factor IF-2 (1045 aa).

Disordered stretches follow at residues Met1–Pro169 and Gln184–Pro451. Residues Ser83–Ser94 are compositionally biased toward gly residues. A compositionally biased stretch (basic and acidic residues) spans Arg103–Glu123. A compositionally biased stretch (low complexity) spans Ala124 to Ala151. Over residues Pro152–Ala163 the composition is skewed to pro residues. Residues Gln184–Ala199 are compositionally biased toward low complexity. 2 stretches are compositionally biased toward basic and acidic residues: residues Glu227 to Ser237 and Arg302 to Gly323. A compositionally biased stretch (pro residues) spans Arg338–Gly348. The segment covering Gly352–Ala363 has biased composition (low complexity). 2 stretches are compositionally biased toward basic and acidic residues: residues Val381–Lys393 and Arg438–Gly450. Residues Pro540–Lys710 enclose the tr-type G domain. The G1 stretch occupies residues Gly549–Thr556. Gly549–Thr556 is a GTP binding site. Residues Gly574–His578 are G2. Positions Asp596 to Gly599 are G3. GTP-binding positions include Asp596–His600 and Asn650–Asp653. Positions Asn650–Asp653 are G4. Positions Ser686–Lys688 are G5.

The protein belongs to the TRAFAC class translation factor GTPase superfamily. Classic translation factor GTPase family. IF-2 subfamily.

Its subcellular location is the cytoplasm. In terms of biological role, one of the essential components for the initiation of protein synthesis. Protects formylmethionyl-tRNA from spontaneous hydrolysis and promotes its binding to the 30S ribosomal subunits. Also involved in the hydrolysis of GTP during the formation of the 70S ribosomal complex. The chain is Translation initiation factor IF-2 from Caulobacter sp. (strain K31).